Reading from the N-terminus, the 280-residue chain is Diaminopimelate epimerase (280 aa).

Substrate is bound by residues Asn13 and Asn67. Catalysis depends on Cys76, which acts as the Proton donor. Substrate is bound by residues 77–78, Asn191, and 208–209; these read GN and ER. Catalysis depends on Cys218, which acts as the Proton acceptor. Residue 219–220 participates in substrate binding; the sequence is GT.

The protein belongs to the diaminopimelate epimerase family. As to quaternary structure, homodimer.

The protein resides in the cytoplasm. The enzyme catalyses (2S,6S)-2,6-diaminopimelate = meso-2,6-diaminopimelate. It functions in the pathway amino-acid biosynthesis; L-lysine biosynthesis via DAP pathway; DL-2,6-diaminopimelate from LL-2,6-diaminopimelate: step 1/1. Catalyzes the stereoinversion of LL-2,6-diaminopimelate (L,L-DAP) to meso-diaminopimelate (meso-DAP), a precursor of L-lysine. This is Diaminopimelate epimerase from Archaeoglobus fulgidus (strain ATCC 49558 / DSM 4304 / JCM 9628 / NBRC 100126 / VC-16).